The sequence spans 205 residues: Molybdenum cofactor guanylyltransferase (205 aa).

GTP-binding positions include 14-16 (LAG), Lys-27, Asp-77, and Asp-107. Asp-107 provides a ligand contact to Mg(2+).

The protein belongs to the MobA family. Monomer. The cofactor is Mg(2+).

It localises to the cytoplasm. It carries out the reaction Mo-molybdopterin + GTP + H(+) = Mo-molybdopterin guanine dinucleotide + diphosphate. Transfers a GMP moiety from GTP to Mo-molybdopterin (Mo-MPT) cofactor (Moco or molybdenum cofactor) to form Mo-molybdopterin guanine dinucleotide (Mo-MGD) cofactor. This is Molybdenum cofactor guanylyltransferase from Burkholderia ambifaria (strain ATCC BAA-244 / DSM 16087 / CCUG 44356 / LMG 19182 / AMMD) (Burkholderia cepacia (strain AMMD)).